A 121-amino-acid polypeptide reads, in one-letter code: uncharacterized protein (121 aa).

2 disordered regions span residues 1–28 (MGCA…QNGD) and 60–81 (QENL…EIPG). Phosphoserine occurs at positions 95 and 115.

This is an uncharacterized protein from Mus musculus (Mouse).